An 845-amino-acid chain; its full sequence is uncharacterized protein (845 aa).

The span at 224–241 (SNNIPTGIQDSSKYTVNG) shows a compositional bias: polar residues. Disordered regions lie at residues 224–244 (SNNI…GPTE), 324–346 (QGTE…ANNG), 383–434 (RTAN…EGSA), 456–485 (VKAS…ATLN), 519–619 (NMTL…PKNS), 674–701 (VVSR…DSSP), and 739–785 (RKST…ANKS). A compositionally biased stretch (basic and acidic residues) spans 390 to 399 (PTKKSNRSEQ). Over residues 400–422 (SKTVANTNVGSKNGTTPRSFAQK) the composition is skewed to polar residues. Over residues 534–546 (NSWRSKYLSEGKN) the composition is skewed to basic and acidic residues. Residues 563-576 (SSLASPTKSSASPL) show a composition bias toward low complexity. Serine 567 carries the phosphoserine modification. Composition is skewed to basic and acidic residues over residues 579-588 (APKETPERLC) and 600-614 (ANLK…KSDI). Composition is skewed to polar residues over residues 674–683 (VVSRTVTSPK), 691–701 (SKASYNQDSSP), and 743–760 (ADSL…TPKA).

It is found in the mitochondrion. This is an uncharacterized protein from Schizosaccharomyces pombe (strain 972 / ATCC 24843) (Fission yeast).